Reading from the N-terminus, the 354-residue chain is Divinyl chlorophyll a/b light-harvesting protein PcbG (354 aa).

6 consecutive transmembrane segments (helical) span residues 27–47 (FIAA…ASTL), 65–85 (IFLA…VWTG), 88–108 (VASV…GALS), 201–221 (VLGG…FHIA), 241–261 (AVLS…AFWC), and 308–328 (LTNV…WHAI).

The protein belongs to the PsbB/PsbC family. IsiA/Pcb subfamily. As to quaternary structure, the antenna complex consists of divinyl chlorophylls (a and b) and divinyl chlorophyll a/b binding proteins and binds more divinyl chlorophyll b than does the antenna complex from high-light-adapted Prochlorococcus. The cofactor is divinyl chlorophyll a. Requires divinyl chlorophyll b as cofactor.

It localises to the cellular thylakoid membrane. Its function is as follows. The antenna complex functions as a light receptor, it captures and delivers excitation energy to photosystems II and I. The Prochlorales pcb genes are not related to higher plant LHCs. The polypeptide is Divinyl chlorophyll a/b light-harvesting protein PcbG (pcbG) (Prochlorococcus marinus (strain NATL2A)).